We begin with the raw amino-acid sequence, 585 residues long: Probable monoterpene synthase MTS1, chloroplastic (585 aa).

Residues 1–29 (MSLSGVPLSAGLAPSPSNKPTNGKGQNIV) form a disordered region. A chloroplast-targeting transit peptide spans 1–31 (MSLSGVPLSAGLAPSPSNKPTNGKGQNIVRR). The segment covering 15–25 (SPSNKPTNGKG) has biased composition (polar residues). The (2E)-geranyl diphosphate site is built by Arg-298, Asp-335, Asp-339, Arg-476, and Asp-479. Residues Asp-335 and Asp-339 each contribute to the Mg(2+) site. The DDXXD motif signature appears at 335 to 339 (DDIYD). Residues Asp-479, Thr-483, and Glu-487 each coordinate Mg(2+).

It belongs to the terpene synthase family. Tpsb subfamily. It depends on Mg(2+) as a cofactor. Mn(2+) is required as a cofactor. Expressed in trichomes. Detected in flowers, but not in leaves.

It is found in the plastid. Its subcellular location is the chloroplast. This chain is Probable monoterpene synthase MTS1, chloroplastic, found in Humulus lupulus (European hop).